Reading from the N-terminus, the 463-residue chain is MRQENDSLGIVMVPEDKLFGAQTGRSKNFFSYGKELMPIEVIQALVKIKKCAAKANGDLQCLDAKRRDMIVAASDEILSGGLEEHFPLKVWQTGSGTQSNMNVNEVIANLAIKRHGGELGSKNPVHPNDHVNKSQSSNDVFPTAMHIAAVQSIKGSLIPALEHLQKNLDAKALEFSRDIKIGRTHLMDAVPMTLGQEFSGYSHQLRSCLERIGFSLTHLYELAIGGTAVGTGLNVPEGFVDKVIYYLRQETGEPFIPASNYFAALSNHDALVQAHGSLAVLACSLIKIATDLSFLGSGPRCGLGEIFFPENEPGSSIMPGKINPTQSEALQMVCSQVIGNNQSVIFSGTKGNFELNVMKPVIIYDFLQSVNLLSGAMRSFADYFVSGLKVNRGQLQQNVERSLMLVTALAPVLGYDKCSKIALKAFHENLSLKEACVSLGFLSEQEFDTHVVPGLMLGKRERE.

Substrate contacts are provided by residues 95 to 97 (SGT), 126 to 129 (HPND), 136 to 138 (SSN), and threonine 184. The active-site Proton donor/acceptor is the histidine 185. Serine 315 is an active-site residue. Substrate is bound by residues serine 316 and 321-323 (KIN).

The protein belongs to the class-II fumarase/aspartase family. Fumarase subfamily. In terms of assembly, homotetramer.

The protein localises to the cytoplasm. It carries out the reaction (S)-malate = fumarate + H2O. The protein operates within carbohydrate metabolism; tricarboxylic acid cycle; (S)-malate from fumarate: step 1/1. Its function is as follows. Involved in the TCA cycle. Catalyzes the stereospecific interconversion of fumarate to L-malate. The chain is Fumarate hydratase class II from Chlamydia muridarum (strain MoPn / Nigg).